Reading from the N-terminus, the 317-residue chain is L-lactate dehydrogenase (317 aa).

NAD(+) is bound by residues Val17, Asp38, Lys43, Tyr69, and 83 to 84 (GA). Substrate-binding residues include Gln86 and Arg92. NAD(+) contacts are provided by residues Ser105, 122-124 (ATN), and Ser147. 124–127 (NPVD) provides a ligand contact to substrate. Substrate is bound at residue 152 to 155 (DTAR). Beta-D-fructose 1,6-bisphosphate-binding residues include Arg157 and His172. Residue His179 is the Proton acceptor of the active site. At Tyr224 the chain carries Phosphotyrosine. Thr233 provides a ligand contact to substrate.

This sequence belongs to the LDH/MDH superfamily. LDH family. As to quaternary structure, homotetramer.

It localises to the cytoplasm. The catalysed reaction is (S)-lactate + NAD(+) = pyruvate + NADH + H(+). The protein operates within fermentation; pyruvate fermentation to lactate; (S)-lactate from pyruvate: step 1/1. Its activity is regulated as follows. Allosterically activated by fructose 1,6-bisphosphate (FBP). Its function is as follows. Catalyzes the conversion of lactate to pyruvate. The polypeptide is L-lactate dehydrogenase (Geobacillus thermodenitrificans (strain NG80-2)).